The following is a 278-amino-acid chain: Large ribosomal subunit protein uL2 (278 aa).

2 disordered regions span residues 33-53 (LTEG…TSRG) and 221-278 (RGVA…KKKR). A compositionally biased stretch (basic residues) spans 269–278 (IRSRHAKKKR).

Belongs to the universal ribosomal protein uL2 family. In terms of assembly, part of the 50S ribosomal subunit. Forms a bridge to the 30S subunit in the 70S ribosome.

In terms of biological role, one of the primary rRNA binding proteins. Required for association of the 30S and 50S subunits to form the 70S ribosome, for tRNA binding and peptide bond formation. It has been suggested to have peptidyltransferase activity; this is somewhat controversial. Makes several contacts with the 16S rRNA in the 70S ribosome. The polypeptide is Large ribosomal subunit protein uL2 (Novosphingobium aromaticivorans (strain ATCC 700278 / DSM 12444 / CCUG 56034 / CIP 105152 / NBRC 16084 / F199)).